We begin with the raw amino-acid sequence, 300 residues long: Ribosomal protein bS6--L-glutamate ligase (300 aa).

The ATP-grasp domain maps to 104-287 (MQLLARQGID…IAGKMIRWIE (184 aa)). Residues lysine 141, 178–179 (EY), aspartate 187, and 211–213 (RSN) each bind ATP. Mg(2+) is bound by residues aspartate 248, glutamate 260, and asparagine 262. Positions 248, 260, and 262 each coordinate Mn(2+).

This sequence belongs to the RimK family. Mg(2+) serves as cofactor. Requires Mn(2+) as cofactor.

Its function is as follows. An L-glutamate ligase that catalyzes the ATP-dependent post-translational addition of glutamate residues to the C-terminus of ribosomal protein bS6 (RpsF). Is also able to catalyze the synthesis of poly-alpha-glutamate in vitro, via ATP hydrolysis from unprotected glutamate as substrate. The number of glutamate residues added to either RpsF or to poly-alpha-glutamate changes with pH. The sequence is that of Ribosomal protein bS6--L-glutamate ligase from Escherichia coli O7:K1 (strain IAI39 / ExPEC).